Reading from the N-terminus, the 132-residue chain is Small ribosomal subunit protein uS8 (132 aa).

This sequence belongs to the universal ribosomal protein uS8 family. In terms of assembly, part of the 30S ribosomal subunit. Contacts proteins S5 and S12.

Functionally, one of the primary rRNA binding proteins, it binds directly to 16S rRNA central domain where it helps coordinate assembly of the platform of the 30S subunit. The polypeptide is Small ribosomal subunit protein uS8 (Syntrophobacter fumaroxidans (strain DSM 10017 / MPOB)).